Here is a 238-residue protein sequence, read N- to C-terminus: LexA repressor (238 aa).

Positions 26–46 form a DNA-binding region, H-T-H motif; sequence FDEMKDALDLASKSGIHRLIT. Catalysis depends on for autocatalytic cleavage activity residues Ser158 and Lys196.

The protein belongs to the peptidase S24 family. In terms of assembly, homodimer.

The enzyme catalyses Hydrolysis of Ala-|-Gly bond in repressor LexA.. Functionally, represses a number of genes involved in the response to DNA damage (SOS response), including recA and lexA. In the presence of single-stranded DNA, RecA interacts with LexA causing an autocatalytic cleavage which disrupts the DNA-binding part of LexA, leading to derepression of the SOS regulon and eventually DNA repair. The chain is LexA repressor from Sinorhizobium medicae (strain WSM419) (Ensifer medicae).